The sequence spans 417 residues: Gamma-glutamyl phosphate reductase (417 aa).

It belongs to the gamma-glutamyl phosphate reductase family.

Its subcellular location is the cytoplasm. The enzyme catalyses L-glutamate 5-semialdehyde + phosphate + NADP(+) = L-glutamyl 5-phosphate + NADPH + H(+). It participates in amino-acid biosynthesis; L-proline biosynthesis; L-glutamate 5-semialdehyde from L-glutamate: step 2/2. Its function is as follows. Catalyzes the NADPH-dependent reduction of L-glutamate 5-phosphate into L-glutamate 5-semialdehyde and phosphate. The product spontaneously undergoes cyclization to form 1-pyrroline-5-carboxylate. This Meiothermus ruber protein is Gamma-glutamyl phosphate reductase.